Reading from the N-terminus, the 740-residue chain is ATP-dependent RNA helicase DDX1 (740 aa).

The tract at residues 1 to 295 is necessary for interaction with HNRNPK; the sequence is MAAFSEMGVM…APKALIVEPS (295 aa). The interval 1 to 448 is interaction with dsRNA; sequence MAAFSEMGVM…DTVHHVVVPV (448 aa). The necessary for interaction with RELA stretch occupies residues 1–525; sequence MAAFSEMGVM…KIDCDNLEQY (525 aa). Residues 2 to 428 form the Helicase ATP-binding domain; the sequence is AAFSEMGVMP…SEKIMHFPTW (427 aa). Residue 46-53 participates in ATP binding; that stretch reads AETGSGKT. One can recognise a B30.2/SPRY domain in the interval 70 to 247; sequence DQQEGKKGKA…LKFNFGEEEF (178 aa). N6-acetyllysine is present on residues lysine 239 and lysine 268. Lysine 281 is modified (N6-acetyllysine; alternate). Residue lysine 281 forms a Glycyl lysine isopeptide (Lys-Gly) (interchain with G-Cter in SUMO2); alternate linkage. Positions 370-373 match the DEAD box motif; that stretch reads DEAD. Serine 481 carries the post-translational modification Phosphoserine. A Helicase C-terminal domain is found at 493-681; that stretch reads KGEYAVRAIK…QVEPDIKVPV (189 aa). The segment at 525–740 is necessary for interaction with HNRNPK; sequence YFMQQGGGPD…YLPNQLFRTF (216 aa).

It belongs to the DEAD box helicase family. DDX1 subfamily. As to quaternary structure, found in a multi-helicase-TICAM1 complex at least composed of DHX36, DDX1, DDX21 and TICAM1; this complex exists in resting cells with or without poly(I:C) RNA ligand stimulation. Interacts with DHX36. Interacts (via B30.2/SPRY domain) with DDX21 (via N-terminus); this interaction serves as bridges to TICAM1. Interacts with FAM98A (via N- and C-terminus). Interacts with PHF5A (via C-terminus). Interacts with MBNL1. Interacts with CSTF2. Interacts with HNRNPK. Interacts with ATM. Interacts with RELA (via C-terminus). Component of the tRNA-splicing ligase complex. Interacts with PQBP1. Interacts with ERCC6. Phosphorylated by ATM kinase; phosphorylation is increased in response to ionizing radiation (IR).

It localises to the nucleus. Its subcellular location is the cytoplasm. The protein localises to the cytoplasmic granule. It is found in the cytosol. The protein resides in the mitochondrion. The enzyme catalyses ATP + H2O = ADP + phosphate + H(+). Functionally, acts as an ATP-dependent RNA helicase, able to unwind both RNA-RNA and RNA-DNA duplexes. Possesses 5' single-stranded RNA overhang nuclease activity. Possesses ATPase activity on various RNA, but not DNA polynucleotides. May play a role in RNA clearance at DNA double-strand breaks (DSBs), thereby facilitating the template-guided repair of transcriptionally active regions of the genome. Together with RELA, acts as a coactivator to enhance NF-kappa-B-mediated transcriptional activation. Acts as a positive transcriptional regulator of cyclin CCND2 expression. Binds to the cyclin CCND2 promoter region. Associates with chromatin at the NF-kappa-B promoter region via association with RELA. Binds to poly(A) RNA. May be involved in 3'-end cleavage and polyadenylation of pre-mRNAs. Component of the tRNA-splicing ligase complex required to facilitate the enzymatic turnover of catalytic subunit RTCB: together with archease (ZBTB8OS), acts by facilitating the guanylylation of RTCB, a key intermediate step in tRNA ligation. Component of a multi-helicase-TICAM1 complex that acts as a cytoplasmic sensor of viral double-stranded RNA (dsRNA) and plays a role in the activation of a cascade of antiviral responses including the induction of pro-inflammatory cytokines via the adapter molecule TICAM1. Specifically binds (via helicase ATP-binding domain) on both short and long poly(I:C) dsRNA. In Bos taurus (Bovine), this protein is ATP-dependent RNA helicase DDX1 (DDX1).